The primary structure comprises 496 residues: Omega-crystallin (496 aa).

The protein belongs to the aldehyde dehydrogenase family. As to expression, lens.

Functionally, omega-crystallins are structural components of squids and octopi eye lens. Contains relatively little if any DHAL activity. The protein is Omega-crystallin of Enteroctopus dofleini (North Pacific giant octopus).